The primary structure comprises 206 residues: Transcription factor BTF3 (206 aa).

Residues 1 to 42 (MRRTGAPAQADSRGRGRARGGCPGGEATLSQPPPRGGTRGQE) are disordered. Residue R19 is modified to Omega-N-methylarginine. S30 is subject to Phosphoserine. Residues K46 and K54 each carry the N6-methyllysine modification. An NAC-A/B domain is found at 82–147 (TADDKKLQFS…AETKQLTEML (66 aa)). Position 160 is a phosphothreonine (T160). Positions 170–206 (PKQSVDGKAPLATGEDDDDEVPDLVENFDEASKNEAN) are disordered. A Phosphoserine modification is found at S173. Acidic residues predominate over residues 183–198 (GEDDDDEVPDLVENFD).

This sequence belongs to the NAC-beta family. In terms of assembly, part of the nascent polypeptide-associated complex (NAC), which is a heterodimer of NACA and BTF3 (via NAC-A/B domains). NAC associates with ribosomes through the BTF3/NACB subunit. Both subunits can contact nascent polypeptide chains.

The protein resides in the cytoplasm. The protein localises to the nucleus. When associated with NACA, prevents inappropriate targeting of non-secretory polypeptides to the endoplasmic reticulum (ER). Binds to nascent polypeptide chains as they emerge from the ribosome and blocks their interaction with the signal recognition particle (SRP), which normally targets nascent secretory peptides to the ER. BTF3 is also a general transcription factor that can form a stable complex with RNA polymerase II. Required for the initiation of transcription. The chain is Transcription factor BTF3 (BTF3) from Homo sapiens (Human).